Here is a 481-residue protein sequence, read N- to C-terminus: Aspartyl/glutamyl-tRNA(Asn/Gln) amidotransferase subunit B (481 aa).

The protein belongs to the GatB/GatE family. GatB subfamily. In terms of assembly, heterotrimer of A, B and C subunits.

The enzyme catalyses L-glutamyl-tRNA(Gln) + L-glutamine + ATP + H2O = L-glutaminyl-tRNA(Gln) + L-glutamate + ADP + phosphate + H(+). It carries out the reaction L-aspartyl-tRNA(Asn) + L-glutamine + ATP + H2O = L-asparaginyl-tRNA(Asn) + L-glutamate + ADP + phosphate + 2 H(+). In terms of biological role, allows the formation of correctly charged Asn-tRNA(Asn) or Gln-tRNA(Gln) through the transamidation of misacylated Asp-tRNA(Asn) or Glu-tRNA(Gln) in organisms which lack either or both of asparaginyl-tRNA or glutaminyl-tRNA synthetases. The reaction takes place in the presence of glutamine and ATP through an activated phospho-Asp-tRNA(Asn) or phospho-Glu-tRNA(Gln). In Ehrlichia ruminantium (strain Gardel), this protein is Aspartyl/glutamyl-tRNA(Asn/Gln) amidotransferase subunit B.